A 346-amino-acid chain; its full sequence is tRNA N6-adenosine threonylcarbamoyltransferase (346 aa).

His-117 and His-121 together coordinate Fe cation. Substrate is bound by residues 139-143 (QVSGG), Asp-172, Gly-185, Asp-189, and Asn-278. Position 308 (Asp-308) interacts with Fe cation.

The protein belongs to the KAE1 / TsaD family. Fe(2+) is required as a cofactor.

It localises to the cytoplasm. It catalyses the reaction L-threonylcarbamoyladenylate + adenosine(37) in tRNA = N(6)-L-threonylcarbamoyladenosine(37) in tRNA + AMP + H(+). Required for the formation of a threonylcarbamoyl group on adenosine at position 37 (t(6)A37) in tRNAs that read codons beginning with adenine. Is involved in the transfer of the threonylcarbamoyl moiety of threonylcarbamoyl-AMP (TC-AMP) to the N6 group of A37, together with TsaE and TsaB. TsaD likely plays a direct catalytic role in this reaction. The protein is tRNA N6-adenosine threonylcarbamoyltransferase of Lactobacillus delbrueckii subsp. bulgaricus (strain ATCC 11842 / DSM 20081 / BCRC 10696 / JCM 1002 / NBRC 13953 / NCIMB 11778 / NCTC 12712 / WDCM 00102 / Lb 14).